The chain runs to 437 residues: Lipid II isoglutaminyl synthase (glutamine-hydrolyzing) subunit MurT (437 aa).

Residues Cys202, Cys205, Cys224, and Cys226 each coordinate Zn(2+). The active site involves Asp349.

It belongs to the MurCDEF family. MurT subfamily. In terms of assembly, forms a heterodimer with GatD.

The enzyme catalyses beta-D-GlcNAc-(1-&gt;4)-Mur2Ac(oyl-L-Ala-gamma-D-Glu-L-Lys-D-Ala-D-Ala)-di-trans,octa-cis-undecaprenyl diphosphate + L-glutamine + ATP + H2O = beta-D-GlcNAc-(1-&gt;4)-Mur2Ac(oyl-L-Ala-D-isoglutaminyl-L-Lys-D-Ala-D-Ala)-di-trans,octa-cis-undecaprenyl diphosphate + L-glutamate + ADP + phosphate + H(+). The catalysed reaction is beta-D-GlcNAc-(1-&gt;4)-Mur2Ac(oyl-L-Ala-gamma-D-Glu-L-Lys-D-Ala-D-Ala)-di-trans,octa-cis-undecaprenyl diphosphate + ATP = beta-D-GlcNAc-(1-&gt;4)-Mur2Ac(oyl-L-Ala-gamma-D-O-P-Glu-L-Lys-D-Ala-D-Ala)-di-trans,octa-cis-undecaprenyl diphosphate + ADP. It carries out the reaction beta-D-GlcNAc-(1-&gt;4)-Mur2Ac(oyl-L-Ala-gamma-D-O-P-Glu-L-Lys-D-Ala-D-Ala)-di-trans,octa-cis-undecaprenyl diphosphate + NH4(+) = beta-D-GlcNAc-(1-&gt;4)-Mur2Ac(oyl-L-Ala-D-isoglutaminyl-L-Lys-D-Ala-D-Ala)-di-trans,octa-cis-undecaprenyl diphosphate + phosphate + H(+). It participates in cell wall biogenesis; peptidoglycan biosynthesis. The lipid II isoglutaminyl synthase complex catalyzes the formation of alpha-D-isoglutamine in the cell wall lipid II stem peptide. The MurT subunit catalyzes the ATP-dependent amidation of D-glutamate residue of lipid II, converting it to an isoglutamine residue. This Staphylococcus aureus (strain N315) protein is Lipid II isoglutaminyl synthase (glutamine-hydrolyzing) subunit MurT.